The primary structure comprises 410 residues: Putative formamidase C869.04 (410 aa).

Belongs to the acetamidase/formamidase family. In terms of assembly, homotrimer.

It is found in the cytoplasm. The protein localises to the nucleus. The catalysed reaction is formamide + H2O = formate + NH4(+). In terms of biological role, hydrolyzes formamide with the production of ammonia which can be used as a source of nitrogen for growth. May also act on acetamide, propanamide and butanamide. The sequence is that of Putative formamidase C869.04 from Schizosaccharomyces pombe (strain 972 / ATCC 24843) (Fission yeast).